A 194-amino-acid chain; its full sequence is Imidazoleglycerol-phosphate dehydratase (194 aa).

The protein belongs to the imidazoleglycerol-phosphate dehydratase family.

The protein localises to the cytoplasm. It carries out the reaction D-erythro-1-(imidazol-4-yl)glycerol 3-phosphate = 3-(imidazol-4-yl)-2-oxopropyl phosphate + H2O. It participates in amino-acid biosynthesis; L-histidine biosynthesis; L-histidine from 5-phospho-alpha-D-ribose 1-diphosphate: step 6/9. This Methanothermobacter thermautotrophicus (strain ATCC 29096 / DSM 1053 / JCM 10044 / NBRC 100330 / Delta H) (Methanobacterium thermoautotrophicum) protein is Imidazoleglycerol-phosphate dehydratase.